The primary structure comprises 445 residues: Probable D-serine dehydratase (445 aa).

At Lys111 the chain carries N6-(pyridoxal phosphate)lysine.

The protein belongs to the serine/threonine dehydratase family. DsdA subfamily. Pyridoxal 5'-phosphate serves as cofactor.

The enzyme catalyses D-serine = pyruvate + NH4(+). The polypeptide is Probable D-serine dehydratase (Burkholderia pseudomallei (strain K96243)).